The chain runs to 125 residues: Succinate dehydrogenase assembly factor 3, mitochondrial (125 aa).

A mitochondrion-targeting transit peptide spans 1–30 (MTGRHVSRVRSLYRRILQLHRALPPDLKAL).

It belongs to the complex I LYR family. SDHAF3 subfamily. In terms of assembly, interacts with Sdhb within an Sdha-Sdhb subcomplex.

The protein localises to the mitochondrion matrix. Functionally, plays an essential role in the assembly of succinate dehydrogenase (SDH), an enzyme complex (also referred to as respiratory complex II) that is a component of both the tricarboxylic acid (TCA) cycle and the mitochondrial electron transport chain, and which couples the oxidation of succinate to fumarate with the reduction of ubiquinone (coenzyme Q) to ubiquinol. Promotes maturation of the iron-sulfur protein subunit Sdhb of the SDH catalytic dimer, protecting it from the deleterious effects of oxidants. May act together with SDHAF1. The polypeptide is Succinate dehydrogenase assembly factor 3, mitochondrial (Rattus norvegicus (Rat)).